The chain runs to 149 residues: Large ribosomal subunit protein bL9 (149 aa).

The protein belongs to the bacterial ribosomal protein bL9 family.

In terms of biological role, binds to the 23S rRNA. This is Large ribosomal subunit protein bL9 from Edwardsiella ictaluri (strain 93-146).